The sequence spans 540 residues: O-phosphoserine--tRNA(Cys) ligase (540 aa).

Substrate contacts are provided by residues histidine 188–threonine 190, serine 233–serine 235, tyrosine 275–tyrosine 276, and asparagine 319.

The protein belongs to the class-II aminoacyl-tRNA synthetase family. O-phosphoseryl-tRNA(Cys) synthetase subfamily. As to quaternary structure, homotetramer. Interacts with SepCysS.

The enzyme catalyses tRNA(Cys) + O-phospho-L-serine + ATP = O-phospho-L-seryl-tRNA(Cys) + AMP + diphosphate. Catalyzes the attachment of O-phosphoserine (Sep) to tRNA(Cys). The polypeptide is O-phosphoserine--tRNA(Cys) ligase (Methanococcus aeolicus (strain ATCC BAA-1280 / DSM 17508 / OCM 812 / Nankai-3)).